The following is a 277-amino-acid chain: Urease accessory protein UreD (277 aa).

This sequence belongs to the UreD family. As to quaternary structure, ureD, UreF and UreG form a complex that acts as a GTP-hydrolysis-dependent molecular chaperone, activating the urease apoprotein by helping to assemble the nickel containing metallocenter of UreC. The UreE protein probably delivers the nickel.

The protein resides in the cytoplasm. In terms of biological role, required for maturation of urease via the functional incorporation of the urease nickel metallocenter. The sequence is that of Urease accessory protein UreD from Sinorhizobium medicae (strain WSM419) (Ensifer medicae).